We begin with the raw amino-acid sequence, 696 residues long: Gametogenetin-binding protein 2 (696 aa).

Serine 360 is subject to Phosphoserine.

As to quaternary structure, interacts with GGN.

It localises to the cytoplasmic vesicle. Its function is as follows. May be involved in spermatogenesis. The polypeptide is Gametogenetin-binding protein 2 (Ggnbp2) (Rattus norvegicus (Rat)).